The following is a 283-amino-acid chain: uncharacterized protein (283 aa).

Gly2 is lipidated: N-myristoyl glycine; by host. N-linked (GlcNAc...) asparagine; by host glycosylation is found at Asn31, Asn95, Asn105, Asn108, Asn137, and Asn147. 2 helical membrane-spanning segments follow: residues 181 to 201 (IIAA…VVYF) and 250 to 270 (FIVL…LDIP). N-linked (GlcNAc...) asparagine; by host glycosylation is present at Asn277.

It localises to the membrane. This is an uncharacterized protein from Acanthamoeba polyphaga (Amoeba).